The following is a 359-amino-acid chain: Peptide chain release factor 1 (359 aa).

Position 235 is an N5-methylglutamine (Q235).

The protein belongs to the prokaryotic/mitochondrial release factor family. In terms of processing, methylated by PrmC. Methylation increases the termination efficiency of RF1.

It localises to the cytoplasm. In terms of biological role, peptide chain release factor 1 directs the termination of translation in response to the peptide chain termination codons UAG and UAA. The protein is Peptide chain release factor 1 of Polynucleobacter asymbioticus (strain DSM 18221 / CIP 109841 / QLW-P1DMWA-1) (Polynucleobacter necessarius subsp. asymbioticus).